The primary structure comprises 1051 residues: Probable valine--tRNA ligase, mitochondrial (1051 aa).

The N-terminal 20 residues, 1–20 (MNKLLFLSKKSSTSNLYRFY), are a transit peptide targeting the mitochondrion. Positions 71-81 (PNVTGSLHIGH) match the 'HIGH' region motif. The short motif at 606–610 (KMSKS) is the 'KMSKS' region element. Lysine 609 is an ATP binding site. Residues 972–1019 (KELQISIEFDKEINNQLNQKLINPNQSNDKKILKLENFIKQLQDEIDN) are a coiled coil.

It belongs to the class-I aminoacyl-tRNA synthetase family.

It localises to the mitochondrion. The catalysed reaction is tRNA(Val) + L-valine + ATP = L-valyl-tRNA(Val) + AMP + diphosphate. The protein is Probable valine--tRNA ligase, mitochondrial (valS2) of Dictyostelium discoideum (Social amoeba).